A 170-amino-acid chain; its full sequence is Lipoprotein signal peptidase (170 aa).

The next 5 helical transmembrane spans lie at 13–33 (IFISILVFFDQWSKYLVVTYV), 72–92 (LFFLIIPIIILVFVFSFSLKE), 96–113 (VSRFALILILSGGIGNII), 116–136 (LFRPLGVVDFLDVKFFGIFGL), and 142–162 (FNFADSYVVVGMIVFIIYDLF). Active-site residues include Asp124 and Asp146.

The protein belongs to the peptidase A8 family.

The protein localises to the cell inner membrane. The enzyme catalyses Release of signal peptides from bacterial membrane prolipoproteins. Hydrolyzes -Xaa-Yaa-Zaa-|-(S,diacylglyceryl)Cys-, in which Xaa is hydrophobic (preferably Leu), and Yaa (Ala or Ser) and Zaa (Gly or Ala) have small, neutral side chains.. The protein operates within protein modification; lipoprotein biosynthesis (signal peptide cleavage). Functionally, this protein specifically catalyzes the removal of signal peptides from prolipoproteins. This Borrelia duttonii (strain Ly) protein is Lipoprotein signal peptidase.